The sequence spans 223 residues: ATP synthase subunit a 1 (223 aa).

Transmembrane regions (helical) follow at residues 20–40 (QTIV…AFLT), 78–98 (YLSY…FTII), 107–127 (SLST…LYGI), 173–193 (VMII…LMSV), and 194–214 (LGLL…TVYI).

The protein belongs to the ATPase A chain family. As to quaternary structure, F-type ATPases have 2 components, CF(1) - the catalytic core - and CF(0) - the membrane proton channel. CF(1) has five subunits: alpha(3), beta(3), gamma(1), delta(1), epsilon(1). CF(0) has four main subunits: a, b, b' and c.

It localises to the cell inner membrane. Functionally, key component of the proton channel; it plays a direct role in the translocation of protons across the membrane. The polypeptide is ATP synthase subunit a 1 (Prosthecochloris aestuarii (strain DSM 271 / SK 413)).